The sequence spans 338 residues: POU domain, class 4, transcription factor 3 (338 aa).

Positions 56–65 (RAEALAAVDI) match the POU-IV box motif. Positions 179–256 (DVESDPRELE…VLQAWLEEAE (78 aa)) constitute a POU-specific domain. Residues 274–333 (RKRKRTSIAAPEKRSLEAYFAIQPRPSSEKIAAIAEKLDLKKNVVRVWFCNQRQKQKRMK) constitute a DNA-binding region (homeobox).

This sequence belongs to the POU transcription factor family. Class-4 subfamily. As to quaternary structure, interacts with ISL1. In terms of tissue distribution, brain.

Its subcellular location is the nucleus. The protein resides in the cytoplasm. Functionally, acts as a transcriptional activator. Acts by binding to sequences related to the consensus octamer motif 5'-ATGCAAAT-3' in the regulatory regions of its target genes. Involved in the auditory system development, required for terminal differentiation of hair cells in the inner ear. This is POU domain, class 4, transcription factor 3 from Mus musculus (Mouse).